The chain runs to 66 residues: MANKMKTRKSAKKRYSFTVNGKVKYKKQNLRHILTKKSSKRKRNLRKSGNLSCFEVKRIKTLLPYG.

Belongs to the bacterial ribosomal protein bL35 family.

This chain is Large ribosomal subunit protein bL35, found in Borreliella burgdorferi (strain ATCC 35210 / DSM 4680 / CIP 102532 / B31) (Borrelia burgdorferi).